Here is a 303-residue protein sequence, read N- to C-terminus: Phosphoribosylaminoimidazole-succinocarboxamide synthase (303 aa).

Belongs to the SAICAR synthetase family.

It catalyses the reaction 5-amino-1-(5-phospho-D-ribosyl)imidazole-4-carboxylate + L-aspartate + ATP = (2S)-2-[5-amino-1-(5-phospho-beta-D-ribosyl)imidazole-4-carboxamido]succinate + ADP + phosphate + 2 H(+). It functions in the pathway purine metabolism; IMP biosynthesis via de novo pathway; 5-amino-1-(5-phospho-D-ribosyl)imidazole-4-carboxamide from 5-amino-1-(5-phospho-D-ribosyl)imidazole-4-carboxylate: step 1/2. In Pichia angusta (Yeast), this protein is Phosphoribosylaminoimidazole-succinocarboxamide synthase (ADE1).